The chain runs to 419 residues: MHKLIIHGGTPLKGSINISGAKNAVLPIMAASILTDKLHITNVPKLTDVSTMKDLLRSHGADIEIIEHQDEFELIIDTKNINNFTADYEIVRKMRASIWVLGPLLTKYGKAKVSLPGGCAIGARQVDLHIAVLKAMGAEIEIEDGYINASSKGRLKGTHFVFDKVSVGATINAILAAVLAEGETVLFNCGREPEIVDLCNCLITMGADIAGIGTSEITIKGKDSLNKASYKVLSDRIEAGTYMFAAAITKGDVKICRIDYHIVKNIALKLIETGIKVVPINNGVQVTYEGKLNSVDLETNPYPGFATDLQAQFMSLMTLSSGVSMITENIFENRFMHVPELCRMGADIVVRGNKAVVRGVEMLKGAEVMASDLRASVSLILAGLSTSSKTVLHRIYHLDRGFQDLEKKLSNCGADIKRV.

22 to 23 (KN) is a phosphoenolpyruvate binding site. Residue arginine 95 participates in UDP-N-acetyl-alpha-D-glucosamine binding. Cysteine 119 serves as the catalytic Proton donor. Residue cysteine 119 is modified to 2-(S-cysteinyl)pyruvic acid O-phosphothioketal. UDP-N-acetyl-alpha-D-glucosamine contacts are provided by residues 164–167 (KVSV), aspartate 308, and isoleucine 330.

It belongs to the EPSP synthase family. MurA subfamily.

It is found in the cytoplasm. It catalyses the reaction phosphoenolpyruvate + UDP-N-acetyl-alpha-D-glucosamine = UDP-N-acetyl-3-O-(1-carboxyvinyl)-alpha-D-glucosamine + phosphate. It functions in the pathway cell wall biogenesis; peptidoglycan biosynthesis. Its function is as follows. Cell wall formation. Adds enolpyruvyl to UDP-N-acetylglucosamine. This chain is UDP-N-acetylglucosamine 1-carboxyvinyltransferase, found in Rickettsia africae (strain ESF-5).